The primary structure comprises 508 residues: Protein adenylyltransferase Fic (508 aa).

Residues 48 to 70 (FYRFALFFIAGSFAAFSFHALTS) form a helical membrane-spanning segment. 2 TPR repeats span residues 132-165 (ALGALRLAQDMHLSGKDDKASRLFEHALALAPKH) and 166-200 (PEVLLRYGEFLEHNQRNIVLADQYYFQALTLCPSN). The Inhibitory (S/T)XXXE(G/N) motif signature appears at 257-262 (SVGIEG). ATP is bound by residues E261 and 342–345 (VGGH). Residues 311–446 (ITIKDILELH…IRPFVRFIAD (136 aa)) enclose the Fido domain. Residue H389 is part of the active site. Residues 393–400 (DGNGRTSR), 425–426 (YY), and N433 contribute to the ATP site.

The protein belongs to the fic family. As to quaternary structure, homodimer.

It localises to the membrane. It catalyses the reaction L-tyrosyl-[protein] + ATP = O-(5'-adenylyl)-L-tyrosyl-[protein] + diphosphate. The catalysed reaction is L-threonyl-[protein] + ATP = 3-O-(5'-adenylyl)-L-threonyl-[protein] + diphosphate. The enzyme catalyses 3-O-(5'-adenylyl)-L-threonyl-[protein] + H2O = L-threonyl-[protein] + AMP + H(+). With respect to regulation, the side chain of Glu-261 determines which of the two opposing activities (AMPylase or de-AMPylase) will take place. In response to endoplasmic reticulum stress, mediates de-AMPylase activity. Adenylyltransferase activity is inhibited by the inhibitory helix present at the N-terminus: Glu-261 binds ATP and competes with ATP-binding at Arg-400, thereby preventing adenylyltransferase activity. In unstressed cells, disengagement of Glu-261 promotes adenylyltransferase activity. Activation dissociates ATP-binding from Glu-261, allowing ordered binding of the entire ATP moiety with the alpha-phosphate in an orientation that is productive for accepting an incoming target hydroxyl side chain. Functionally, protein that can both mediate the addition of adenosine 5'-monophosphate (AMP) to specific residues of target proteins (AMPylation), and the removal of the same modification from target proteins (de-AMPylation), depending on the context. The side chain of Glu-261 determines which of the two opposing activities (AMPylase or de-AMPylase) will take place. Acts as a key regulator of the unfolded protein response (UPR) by mediating AMPylation or de-AMPylation of Hsc70-3/BiP. In unstressed cells, acts as an adenylyltransferase by mediating AMPylation of Hsc70-3/BiP at 'Thr-518', thereby inactivating it. In response to endoplasmic reticulum stress, acts as a phosphodiesterase by mediating removal of ATP (de-AMPylation) from Hsc70-3/BiP at 'Thr-518', leading to restore HSPA5/BiP activity. This is Protein adenylyltransferase Fic from Drosophila persimilis (Fruit fly).